The sequence spans 593 residues: NADH-quinone oxidoreductase subunit C/D (593 aa).

An NADH dehydrogenase I subunit C region spans residues 1-184 (MTADNALYIP…DPYSLTLAKQ (184 aa)). Residues 208–593 (DYMFLNLGPN…IDFVMADVDR (386 aa)) are NADH dehydrogenase I subunit D.

It in the N-terminal section; belongs to the complex I 30 kDa subunit family. In the C-terminal section; belongs to the complex I 49 kDa subunit family. In terms of assembly, NDH-1 is composed of 13 different subunits. Subunits NuoB, CD, E, F, and G constitute the peripheral sector of the complex.

The protein localises to the cell inner membrane. The enzyme catalyses a quinone + NADH + 5 H(+)(in) = a quinol + NAD(+) + 4 H(+)(out). Its function is as follows. NDH-1 shuttles electrons from NADH, via FMN and iron-sulfur (Fe-S) centers, to quinones in the respiratory chain. The immediate electron acceptor for the enzyme in this species is believed to be ubiquinone. Couples the redox reaction to proton translocation (for every two electrons transferred, four hydrogen ions are translocated across the cytoplasmic membrane), and thus conserves the redox energy in a proton gradient. The protein is NADH-quinone oxidoreductase subunit C/D of Pseudomonas savastanoi pv. phaseolicola (strain 1448A / Race 6) (Pseudomonas syringae pv. phaseolicola (strain 1448A / Race 6)).